Here is a 59-residue protein sequence, read N- to C-terminus: Large ribosomal subunit protein uL30 (59 aa).

The protein belongs to the universal ribosomal protein uL30 family. In terms of assembly, part of the 50S ribosomal subunit.

The protein is Large ribosomal subunit protein uL30 of Clostridium beijerinckii (strain ATCC 51743 / NCIMB 8052) (Clostridium acetobutylicum).